The sequence spans 166 residues: Cyclic pyranopterin monophosphate synthase (166 aa).

Substrate is bound by residues 83-85 and 121-122; these read LCH and ME. Residue Asp-136 is part of the active site.

Belongs to the MoaC family. In terms of assembly, homohexamer; trimer of dimers.

It carries out the reaction (8S)-3',8-cyclo-7,8-dihydroguanosine 5'-triphosphate = cyclic pyranopterin phosphate + diphosphate. The protein operates within cofactor biosynthesis; molybdopterin biosynthesis. Its function is as follows. Catalyzes the conversion of (8S)-3',8-cyclo-7,8-dihydroguanosine 5'-triphosphate to cyclic pyranopterin monophosphate (cPMP). This Rhodospirillum rubrum (strain ATCC 11170 / ATH 1.1.1 / DSM 467 / LMG 4362 / NCIMB 8255 / S1) protein is Cyclic pyranopterin monophosphate synthase.